The following is a 153-amino-acid chain: Endoribonuclease YbeY (153 aa).

Zn(2+) contacts are provided by His113, His117, and His123.

This sequence belongs to the endoribonuclease YbeY family. The cofactor is Zn(2+).

The protein localises to the cytoplasm. In terms of biological role, single strand-specific metallo-endoribonuclease involved in late-stage 70S ribosome quality control and in maturation of the 3' terminus of the 16S rRNA. The protein is Endoribonuclease YbeY of Aliivibrio fischeri (strain ATCC 700601 / ES114) (Vibrio fischeri).